Consider the following 243-residue polypeptide: Geranylgeranylglyceryl phosphate synthase (243 aa).

Residues Asp29 and Ser58 each coordinate Mg(2+). Sn-glycerol 1-phosphate contacts are provided by residues 178–184, 209–210, and 231–232; these read YLEAGSG, GG, and GT.

Belongs to the GGGP/HepGP synthase family. Group II subfamily. As to quaternary structure, homodimer. It depends on Mg(2+) as a cofactor.

The enzyme catalyses sn-glycerol 1-phosphate + (2E,6E,10E)-geranylgeranyl diphosphate = sn-3-O-(geranylgeranyl)glycerol 1-phosphate + diphosphate. Functionally, prenyltransferase that catalyzes the transfer of the geranylgeranyl moiety of geranylgeranyl diphosphate (GGPP) to the C3 hydroxyl of sn-glycerol-1-phosphate (G1P). The chain is Geranylgeranylglyceryl phosphate synthase from Flavobacterium johnsoniae (strain ATCC 17061 / DSM 2064 / JCM 8514 / BCRC 14874 / CCUG 350202 / NBRC 14942 / NCIMB 11054 / UW101) (Cytophaga johnsonae).